A 386-amino-acid chain; its full sequence is Cytochrome b (386 aa).

4 consecutive transmembrane segments (helical) span residues 32–52 (LGSL…FLAM), 76–98 (WFIR…IHIG), 113–133 (VWNV…LGYC), and 179–199 (FFAF…MHFM). Positions 82 and 96 each coordinate heme b. Residues H183 and H197 each coordinate heme b. Residue H202 coordinates a ubiquinone. The next 4 membrane-spanning stretches (helical) occupy residues 225–245 (FIFK…LFVF), 289–309 (LLGV…PITD), 321–341 (FSKF…HLGE), and 348–368 (FVVM…VIVP).

Belongs to the cytochrome b family. As to quaternary structure, fungal cytochrome b-c1 complex contains 10 subunits; 3 respiratory subunits, 2 core proteins and 5 low-molecular weight proteins. Cytochrome b-c1 complex is a homodimer. Heme b serves as cofactor.

It localises to the mitochondrion inner membrane. Its function is as follows. Component of the ubiquinol-cytochrome c reductase complex (complex III or cytochrome b-c1 complex) that is part of the mitochondrial respiratory chain. The b-c1 complex mediates electron transfer from ubiquinol to cytochrome c. Contributes to the generation of a proton gradient across the mitochondrial membrane that is then used for ATP synthesis. The polypeptide is Cytochrome b (COB) (Kluyveromyces lactis (strain ATCC 8585 / CBS 2359 / DSM 70799 / NBRC 1267 / NRRL Y-1140 / WM37) (Yeast)).